The primary structure comprises 720 residues: Photosystem I P700 chlorophyll a apoprotein A1 (720 aa).

8 helical membrane-spanning segments follow: residues 62 to 85 (IFSA…FHGA), 148 to 171 (LYCT…FHYH), 186 to 210 (LNHH…HVSL), 282 to 300 (IVHH…GHMY), 337 to 360 (WHAQ…HHMY), 376 to 402 (LSLF…IFLV), 424 to 446 (AIIS…LYIH), and 522 to 540 (FLVH…LILL). 2 residues coordinate [4Fe-4S] cluster: cysteine 564 and cysteine 573. The next 2 membrane-spanning stretches (helical) occupy residues 580-601 (HVFL…HFSW) and 655-677 (LSAY…MFLF). Histidine 666 is a binding site for chlorophyll a'. Chlorophyll a-binding residues include methionine 674 and tyrosine 682. Tryptophan 683 provides a ligand contact to phylloquinone. Residues 715-720 (AVGVAH) form a helical membrane-spanning segment.

It belongs to the PsaA/PsaB family. In terms of assembly, the PsaA/B heterodimer binds the P700 chlorophyll special pair and subsequent electron acceptors. PSI consists of a core antenna complex that captures photons, and an electron transfer chain that converts photonic excitation into a charge separation. The eukaryotic PSI reaction center is composed of at least 11 subunits. It depends on P700 is a chlorophyll a/chlorophyll a' dimer, A0 is one or more chlorophyll a, A1 is one or both phylloquinones and FX is a shared 4Fe-4S iron-sulfur center. as a cofactor.

It localises to the plastid. Its subcellular location is the chloroplast thylakoid membrane. It carries out the reaction reduced [plastocyanin] + hnu + oxidized [2Fe-2S]-[ferredoxin] = oxidized [plastocyanin] + reduced [2Fe-2S]-[ferredoxin]. PsaA and PsaB bind P700, the primary electron donor of photosystem I (PSI), as well as the electron acceptors A0, A1 and FX. PSI is a plastocyanin-ferredoxin oxidoreductase, converting photonic excitation into a charge separation, which transfers an electron from the donor P700 chlorophyll pair to the spectroscopically characterized acceptors A0, A1, FX, FA and FB in turn. Oxidized P700 is reduced on the lumenal side of the thylakoid membrane by plastocyanin. In Ephedra tweediana (Vining horsetail), this protein is Photosystem I P700 chlorophyll a apoprotein A1.